The primary structure comprises 352 residues: Holliday junction branch migration complex subunit RuvB (352 aa).

The tract at residues 13–201 (LPLRKKELRL…FGISQKIEFY (189 aa)) is large ATPase domain (RuvB-L). ATP contacts are provided by residues Arg-41, Gly-82, Lys-85, Thr-86, Thr-87, 148–150 (EDF), Arg-191, Tyr-201, and Arg-238. Thr-86 lines the Mg(2+) pocket. Residues 202 to 273 (NYDELKQILL…LIKKALNSYQ (72 aa)) are small ATPAse domain (RuvB-S). The head domain (RuvB-H) stretch occupies residues 276–352 (DKGLDSLDRH…KYIDSKNDDF (77 aa)). DNA contacts are provided by Arg-330 and Arg-335.

It belongs to the RuvB family. Homohexamer. Forms an RuvA(8)-RuvB(12)-Holliday junction (HJ) complex. HJ DNA is sandwiched between 2 RuvA tetramers; dsDNA enters through RuvA and exits via RuvB. An RuvB hexamer assembles on each DNA strand where it exits the tetramer. Each RuvB hexamer is contacted by two RuvA subunits (via domain III) on 2 adjacent RuvB subunits; this complex drives branch migration. In the full resolvosome a probable DNA-RuvA(4)-RuvB(12)-RuvC(2) complex forms which resolves the HJ.

Its subcellular location is the cytoplasm. The catalysed reaction is ATP + H2O = ADP + phosphate + H(+). In terms of biological role, the RuvA-RuvB-RuvC complex processes Holliday junction (HJ) DNA during genetic recombination and DNA repair, while the RuvA-RuvB complex plays an important role in the rescue of blocked DNA replication forks via replication fork reversal (RFR). RuvA specifically binds to HJ cruciform DNA, conferring on it an open structure. The RuvB hexamer acts as an ATP-dependent pump, pulling dsDNA into and through the RuvAB complex. RuvB forms 2 homohexamers on either side of HJ DNA bound by 1 or 2 RuvA tetramers; 4 subunits per hexamer contact DNA at a time. Coordinated motions by a converter formed by DNA-disengaged RuvB subunits stimulates ATP hydrolysis and nucleotide exchange. Immobilization of the converter enables RuvB to convert the ATP-contained energy into a lever motion, pulling 2 nucleotides of DNA out of the RuvA tetramer per ATP hydrolyzed, thus driving DNA branch migration. The RuvB motors rotate together with the DNA substrate, which together with the progressing nucleotide cycle form the mechanistic basis for DNA recombination by continuous HJ branch migration. Branch migration allows RuvC to scan DNA until it finds its consensus sequence, where it cleaves and resolves cruciform DNA. The sequence is that of Holliday junction branch migration complex subunit RuvB from Prochlorococcus marinus (strain MIT 9301).